The following is a 61-amino-acid chain: Small ribosomal subunit protein uS14B (61 aa).

4 residues coordinate Zn(2+): C24, C27, C40, and C43.

It belongs to the universal ribosomal protein uS14 family. Zinc-binding uS14 subfamily. Part of the 30S ribosomal subunit. Contacts proteins S3 and S10. The cofactor is Zn(2+).

In terms of biological role, binds 16S rRNA, required for the assembly of 30S particles and may also be responsible for determining the conformation of the 16S rRNA at the A site. The chain is Small ribosomal subunit protein uS14B from Pediococcus pentosaceus (strain ATCC 25745 / CCUG 21536 / LMG 10740 / 183-1w).